Here is a 151-residue protein sequence, read N- to C-terminus: Acidic phospholipase A2 4 (151 aa).

The signal sequence occupies residues 1 to 27 (MYPAHLLVLLAVCVSLLGAASIPARPL). Intrachain disulfides connect C38–C104, C54–C151, C56–C72, C71–C132, C78–C125, C88–C118, and C111–C123. Ca(2+)-binding residues include Y55, G57, and G59. H75 is an active-site residue. A Ca(2+)-binding site is contributed by D76. The active site involves D126.

The protein belongs to the phospholipase A2 family. Group I subfamily. D49 sub-subfamily. Requires Ca(2+) as cofactor. As to expression, expressed by the venom gland.

The protein resides in the secreted. It catalyses the reaction a 1,2-diacyl-sn-glycero-3-phosphocholine + H2O = a 1-acyl-sn-glycero-3-phosphocholine + a fatty acid + H(+). PLA2 catalyzes the calcium-dependent hydrolysis of the 2-acyl groups in 3-sn-phosphoglycerides. The polypeptide is Acidic phospholipase A2 4 (Tropidechis carinatus (Australian rough-scaled snake)).